The sequence spans 176 residues: MLDLGLSKMALIGVVALVVLGPERLPRVARTAGALFGRAQRYINDVKSEVSREIELDALRTMKTDFESAARNVETTIHDNLREHEKELNDTWHSAVGGLNEGSVDAGTYGSDTPAAPSWRGSTAALARKRRNWRVKQAAMPVWYKRATTRRTHVQSGAARVARHQPASLRRPTRFL.

A helical membrane pass occupies residues Met-1 to Gly-21. The disordered stretch occupies residues Gln-155–Leu-176.

It belongs to the TatB family. As to quaternary structure, the Tat system comprises two distinct complexes: a TatABC complex, containing multiple copies of TatA, TatB and TatC subunits, and a separate TatA complex, containing only TatA subunits. Substrates initially bind to the TatABC complex, which probably triggers association of the separate TatA complex to form the active translocon.

The protein resides in the cell inner membrane. Functionally, part of the twin-arginine translocation (Tat) system that transports large folded proteins containing a characteristic twin-arginine motif in their signal peptide across membranes. Together with TatC, TatB is part of a receptor directly interacting with Tat signal peptides. TatB may form an oligomeric binding site that transiently accommodates folded Tat precursor proteins before their translocation. The polypeptide is Sec-independent protein translocase protein TatB (Burkholderia ambifaria (strain ATCC BAA-244 / DSM 16087 / CCUG 44356 / LMG 19182 / AMMD) (Burkholderia cepacia (strain AMMD))).